Consider the following 132-residue polypeptide: Hemoglobin subunit beta-1 (132 aa).

The 132-residue stretch at 1 to 132 (WSKIDIDVCG…VVSALGRQYH (132 aa)) folds into the Globin domain. The heme b site is built by histidine 49 and histidine 78.

The protein belongs to the globin family. Hb 1 is a heterotetramer of two alpha-1 and two beta-1 chains. Hb 2 is a heterotetramer of two alpha-2 and two beta-1 chains. In terms of tissue distribution, red blood cells.

Functionally, involved in oxygen transport from gills to the various peripheral tissues. The protein is Hemoglobin subunit beta-1 (hbb1) of Arctogadus glacialis (Arctic cod).